The primary structure comprises 548 residues: Non-structural protein NS1 (548 aa).

It belongs to the orbivirus non-structural protein NS1 family.

This is Non-structural protein NS1 (Segment-5) from Camelus dromedarius (Dromedary).